The sequence spans 368 residues: Phosphoribosylformylglycinamidine cyclo-ligase (368 aa).

This sequence belongs to the AIR synthase family.

Its subcellular location is the cytoplasm. The enzyme catalyses 2-formamido-N(1)-(5-O-phospho-beta-D-ribosyl)acetamidine + ATP = 5-amino-1-(5-phospho-beta-D-ribosyl)imidazole + ADP + phosphate + H(+). It participates in purine metabolism; IMP biosynthesis via de novo pathway; 5-amino-1-(5-phospho-D-ribosyl)imidazole from N(2)-formyl-N(1)-(5-phospho-D-ribosyl)glycinamide: step 2/2. This is Phosphoribosylformylglycinamidine cyclo-ligase from Novosphingobium aromaticivorans (strain ATCC 700278 / DSM 12444 / CCUG 56034 / CIP 105152 / NBRC 16084 / F199).